A 573-amino-acid polypeptide reads, in one-letter code: Glutamate--tRNA ligase (573 aa).

The short motif at 107–117 (PNPDGAFHLGN) is the 'HIGH' region element.

It belongs to the class-I aminoacyl-tRNA synthetase family. Glutamate--tRNA ligase type 2 subfamily.

The protein localises to the cytoplasm. It catalyses the reaction tRNA(Glu) + L-glutamate + ATP = L-glutamyl-tRNA(Glu) + AMP + diphosphate. Its function is as follows. Catalyzes the attachment of glutamate to tRNA(Glu) in a two-step reaction: glutamate is first activated by ATP to form Glu-AMP and then transferred to the acceptor end of tRNA(Glu). This chain is Glutamate--tRNA ligase, found in Thermococcus kodakarensis (strain ATCC BAA-918 / JCM 12380 / KOD1) (Pyrococcus kodakaraensis (strain KOD1)).